Here is a 177-residue protein sequence, read N- to C-terminus: MNIIQQLEAEQAAKIAAKRTLPEFSPGDTVRVNVRVVEGTRTRVQAYEGVCIARSGGGINESFTVRKISYGEGVERVFPVYSPLVESVDVVRRGKVRRAKLYYLRDRRGKSARIVENTGTRARKLNDAERQAISEEKARIEAEKVAAAQALAAEKAAAEAAEAKAAEEAKAAEAAAE.

This sequence belongs to the bacterial ribosomal protein bL19 family.

In terms of biological role, this protein is located at the 30S-50S ribosomal subunit interface and may play a role in the structure and function of the aminoacyl-tRNA binding site. The chain is Large ribosomal subunit protein bL19 from Sinorhizobium medicae (strain WSM419) (Ensifer medicae).